The primary structure comprises 597 residues: Period protein homolog lin-42 (597 aa).

The interval 1–44 (MEPAGHSSATHNIVVPNANPTQPQPLAPAMREEGATLSPPNTWS) is disordered. Positions 155–223 (LQASHVSSNF…VRQAHIDLHN (69 aa)) constitute a PAS domain. Disordered stretches follow at residues 313-335 (PVPSTSRHSHHHHHSSLKDQNQG), 418-450 (KSQSRPESPAKQDEPFDEKKYPPQTPLTREALT), 473-509 (DDVPSSPPAKRTTPIHWTSSSQNHYRTMAPAPPPPPG), and 555-597 (DGLL…DSQN). Residues 425-438 (SPAKQDEPFDEKKY) show a composition bias toward basic and acidic residues. The segment covering 487–497 (IHWTSSSQNHY) has biased composition (polar residues). The span at 561-577 (GATSTGGASPTSGTNSP) shows a compositional bias: low complexity.

The protein resides in the nucleus. It localises to the cytoplasm. Transcriptional repressor which interacts with the promoter region of target genes. Has a specific role in developmental timing where it regulates temporal expression of a number of miRNAs and mRNAs. Controls temporal cell fate transition during embryonic and early larval development by restricting the expression of specific miRNAs, including let-7, miR-48, lin-4, miR-35 and miR-58. Restricts the accumulation of lin-29 in the hypodermis to the larval L4 stage, thus controlling terminal differentiation of seam cells. Has a role in the miRNA-mediated specification of asymmetric gene expression patterns in gustatory neurons. May also regulate genes involved in other biological processes including transport, small molecule metabolism, and growth. Inhibits dauer formation, by antagonizing daf-12. Functionally, specifically required for maintaining the timing of larval development and molting cycle rhythms. This chain is Period protein homolog lin-42, found in Caenorhabditis elegans.